Consider the following 430-residue polypeptide: Transcriptional regulatory protein RXT2 (430 aa).

Positions 408–430 (EIENTMEDGVVDDNEPDEEANRA) are disordered.

The protein belongs to the RXT2 family. Component of the RPD3C(L) complex composed of at least ASH1, CTI6, DEP1, PHO23, RPD3, RXT2, RXT3, SAP30, SDS3, SIN3, UME1 and UME6.

It localises to the nucleus. Component of the RPD3C(L) histone deacetylase complex (HDAC) responsible for the deacetylation of lysine residues on the N-terminal part of the core histones (H2A, H2B, H3 and H4). Histone deacetylation gives a tag for epigenetic repression and plays an important role in transcriptional regulation, cell cycle progression and developmental events. This is Transcriptional regulatory protein RXT2 (RXT2) from Saccharomyces cerevisiae (strain ATCC 204508 / S288c) (Baker's yeast).